The following is an 89-amino-acid chain: Small ribosomal subunit protein uS15 (89 aa).

It belongs to the universal ribosomal protein uS15 family. Part of the 30S ribosomal subunit. Forms a bridge to the 50S subunit in the 70S ribosome, contacting the 23S rRNA.

In terms of biological role, one of the primary rRNA binding proteins, it binds directly to 16S rRNA where it helps nucleate assembly of the platform of the 30S subunit by binding and bridging several RNA helices of the 16S rRNA. Its function is as follows. Forms an intersubunit bridge (bridge B4) with the 23S rRNA of the 50S subunit in the ribosome. This is Small ribosomal subunit protein uS15 from Nitrosospira multiformis (strain ATCC 25196 / NCIMB 11849 / C 71).